The primary structure comprises 215 residues: Large ribosomal subunit protein eL15 (215 aa).

Residues G179–K215 form a disordered region. Basic and acidic residues predominate over residues K188–K202.

This sequence belongs to the eukaryotic ribosomal protein eL15 family.

The chain is Large ribosomal subunit protein eL15 from Sulfurisphaera tokodaii (strain DSM 16993 / JCM 10545 / NBRC 100140 / 7) (Sulfolobus tokodaii).